The primary structure comprises 176 residues: MRVLFLTISLSLFSIIHADDFAFSEFKPSEGTYYVQVIAVDKEFPEDEIPRDISPLTITYLNNGKMEAKFTVKKDNNCEEINLTLEKIDEPRKITTTRHLHHICDTVRTSEEKYWILSCVREFQGTQIREAELVGPNTDENPKALEDFYRFINRERFVERRIITPRQTEACTSENA.

The signal sequence occupies residues 1–18; the sequence is MRVLFLTISLSLFSIIHA. A disulfide bridge links cysteine 78 with cysteine 171.

Belongs to the calycin superfamily. Lipocalin family. In terms of tissue distribution, mammary gland specific. Secreted in milk.

The protein resides in the secreted. Functionally, probably serves a role in the transport of a small ligand released during the hydrolysis of milk fat. This chain is Late lactation protein A (LLPA), found in Notamacropus eugenii (Tammar wallaby).